A 214-amino-acid chain; its full sequence is External core antigen (214 aa).

Positions 1-19 (MQLFHLCLIISCTCPTVQA) are cleaved as a signal peptide. Residues 25 to 27 (GWL) are HBEAG. The tract at residues 165-214 (NAPILSTLPETTVVRRRDRGRSPRRRTPSPRRRRSQSPRRRRSQSRESQC) is disordered. Residues 178–207 (VRRRDRGRSPRRRTPSPRRRRSQSPRRRRS) are compositionally biased toward basic residues. The 1; half-length repeat unit spans residues 186–192 (SPRRRTP). The 3 X 8 AA repeats of S-P-R-R-R-R-S-Q stretch occupies residues 186–208 (SPRRRTPSPRRRRSQSPRRRRSQ). Residues 186-214 (SPRRRTPSPRRRRSQSPRRRRSQSRESQC) constitute a propeptide that is removed on maturation. Repeat copies occupy residues 193-200 (SPRRRRSQ) and 201-208 (SPRRRRSQ).

It belongs to the orthohepadnavirus precore antigen family. As to quaternary structure, homodimerizes. Post-translationally, phosphorylated. In terms of processing, cleaved by host furin.

It is found in the secreted. Its subcellular location is the host nucleus. Its function is as follows. May regulate immune response to the intracellular capsid in acting as a T-cell tolerogen, by having an immunoregulatory effect which prevents destruction of infected cells by cytotoxic T-cells. This immune regulation may predispose to chronicity during perinatal infections and prevent severe liver injury during adult infections. The polypeptide is External core antigen (Homo sapiens (Human)).